A 484-amino-acid chain; its full sequence is AMP nucleosidase (484 aa).

The protein belongs to the AMP nucleosidase family.

It catalyses the reaction AMP + H2O = adenine + D-ribose 5-phosphate. In terms of biological role, catalyzes the hydrolysis of the N-glycosidic bond of AMP to form adenine and ribose 5-phosphate. Involved in regulation of AMP concentrations. This is AMP nucleosidase from Escherichia coli O157:H7.